We begin with the raw amino-acid sequence, 178 residues long: Ribosome maturation factor RimM (178 aa).

One can recognise a PRC barrel domain in the interval 101-178; that stretch reads TDEYYWYQLV…VMRVEWDADF (78 aa).

The protein belongs to the RimM family. Binds ribosomal protein uS19.

Its subcellular location is the cytoplasm. Functionally, an accessory protein needed during the final step in the assembly of 30S ribosomal subunit, possibly for assembly of the head region. Essential for efficient processing of 16S rRNA. May be needed both before and after RbfA during the maturation of 16S rRNA. It has affinity for free ribosomal 30S subunits but not for 70S ribosomes. The chain is Ribosome maturation factor RimM from Pseudomonas entomophila (strain L48).